The primary structure comprises 294 residues: 4-hydroxy-tetrahydrodipicolinate synthase (294 aa).

T47 provides a ligand contact to pyruvate. Y135 acts as the Proton donor/acceptor in catalysis. Residue K163 is the Schiff-base intermediate with substrate of the active site. A pyruvate-binding site is contributed by T205.

This sequence belongs to the DapA family. In terms of assembly, homotetramer; dimer of dimers.

Its subcellular location is the cytoplasm. It catalyses the reaction L-aspartate 4-semialdehyde + pyruvate = (2S,4S)-4-hydroxy-2,3,4,5-tetrahydrodipicolinate + H2O + H(+). It participates in amino-acid biosynthesis; L-lysine biosynthesis via DAP pathway; (S)-tetrahydrodipicolinate from L-aspartate: step 3/4. Functionally, catalyzes the condensation of (S)-aspartate-beta-semialdehyde [(S)-ASA] and pyruvate to 4-hydroxy-tetrahydrodipicolinate (HTPA). The polypeptide is 4-hydroxy-tetrahydrodipicolinate synthase (Rickettsia peacockii (strain Rustic)).